An 811-amino-acid polypeptide reads, in one-letter code: Transmembrane protease serine 6 (811 aa).

A disordered region spans residues 1-48; that stretch reads MPRCFQLPCSTRMPTTEVPQAADGQGDAGDGEEAAEPEGKFKPPKNTK. Residues 1–59 lie on the Cytoplasmic side of the membrane; sequence MPRCFQLPCSTRMPTTEVPQAADGQGDAGDGEEAAEPEGKFKPPKNTKRKNRDYVRFTP. Residues 8–18 show a composition bias toward polar residues; sequence PCSTRMPTTEV. Residues 60–80 traverse the membrane as a helical; Signal-anchor for type II membrane protein segment; that stretch reads LLLVLAALVSAGVMLWYFLGY. The Extracellular segment spans residues 81–811; that stretch reads KAEVTVSQVY…VINWIQQVLT (731 aa). In terms of domain architecture, SEA spans 86-209; the sequence is VSQVYSGSLR…EGLVILEASV (124 aa). Residues N138, N184, N216, N338, N433, and N453 are each glycosylated (N-linked (GlcNAc...) asparagine). CUB domains lie at 213–336 and 323–440; these read VVLN…QDCQ and FLLS…QISL. C335 and C366 form a disulfide bridge. 3 consecutive LDL-receptor class A domains span residues 445–477, 478–514, and 518–555; these read VQVY…CDGI, KDCP…DRQP, and NGSD…DGQS. Cystine bridges form between C458/C470, C464/C480, C474/C489, C491/C503, C497/C516, C510/C525, C531/C543, C538/C557, C551/C566, and C602/C618. N518 carries an N-linked (GlcNAc...) asparagine glycan. One can recognise a Peptidase S1 domain in the interval 577 to 811; sequence IVGGTVSSEG…VINWIQQVLT (235 aa). Residues H617 and D668 each act as charge relay system in the active site. 3 disulfides stabilise this stretch: C702-C768, C733-C747, and C758-C787. S762 functions as the Charge relay system in the catalytic mechanism.

It belongs to the peptidase S1 family. As to quaternary structure, interacts with HJV. The single-chain zymogen undergoes autoproteolytic processing. This results in TMPRSS6 shedding from the cell surface and conversion into an activated two-chains form which is released extracellularly. The process involves a trans-activation mechanism that requires TMPRSS6 oligomerization. Expressed at highest levels in adult mice liver, kidney and uterus. Also strongly expressed within the nasal cavity by olfactory epithelial cells. A weak, but detectable, signal in adult mice tissues analyzed including brain, lung, heart, kidney, spleen, muscle, intestine, thymus and pancreas. No signal in residual embryonic yolk sac, developing kidney tubules or in embryonic tissues analyzed including lung, heart, gastrointestinal tract and epithelium of the oral cavity.

The protein resides in the cell membrane. Functionally, membrane-bound serine protease. Through the cleavage of cell surface HJV, a regulator of the expression of the iron absorption-regulating hormone hepicidin/HAMP, plays a role in iron homeostasis. The chain is Transmembrane protease serine 6 (Tmprss6) from Mus musculus (Mouse).